The primary structure comprises 495 residues: Sugar phosphate exchanger 3 (495 aa).

The chain crosses the membrane as a helical span at residues Phe16–Ala36. N-linked (GlcNAc...) asparagine glycosylation is present at Asn58. Helical transmembrane passes span Thr82–Ile102, Trp114–Thr134, Leu148–Gly168, Val178–Ala198, and Phe210–Val230. Asn267 is a glycosylation site (N-linked (GlcNAc...) asparagine). The next 6 helical transmembrane spans lie at Leu298–Leu318, Ile334–Leu354, Ala358–Ser378, Leu387–Ile407, Gly429–Ile449, and Leu453–Ile473.

The protein belongs to the major facilitator superfamily. Organophosphate:Pi antiporter (OPA) (TC 2.A.1.4) family. Interacts with ATRAID; the interaction is direct and both proteins are mutually dependent for their stability. Glycosylated.

The protein localises to the endoplasmic reticulum membrane. The protein resides in the lysosome membrane. Functionally, unlike the other SLC37 members, lacks glucose-6-phosphate antiporter activity. In osteoclasts, forms a transporter complex with ATRAID for nitrogen-containing-bisphophonates (N-BPs) required for releasing N-BP molecules that have trafficked to lysosomes through fluid-phase endocytosis into the cytosol. In Bos taurus (Bovine), this protein is Sugar phosphate exchanger 3 (SLC37A3).